We begin with the raw amino-acid sequence, 122 residues long: Ribonuclease pancreatic (122 aa).

A compositionally biased stretch (basic and acidic residues) spans 1–16; that stretch reads ETPAEKFQRQHMDTEH. The disordered stretch occupies residues 1 to 20; it reads ETPAEKFQRQHMDTEHSTAS. Residues Lys6 and Arg9 each contribute to the substrate site. His11 functions as the Proton acceptor in the catalytic mechanism. Disulfide bonds link Cys25-Cys83, Cys39-Cys94, Cys57-Cys109, and Cys64-Cys71. Substrate contacts are provided by residues 40–44, Lys65, and Arg84; that span reads KPLNT. His117 functions as the Proton donor in the catalytic mechanism.

Belongs to the pancreatic ribonuclease family. Monomer. Interacts with and forms tight 1:1 complexes with RNH1. Dimerization of two such complexes may occur. Interaction with RNH1 inhibits this protein. Not glycosylated although the sequence N-V-T, a recognition site for carbohydrate attachment, is present. Pancreas.

The protein localises to the secreted. The catalysed reaction is an [RNA] containing cytidine + H2O = an [RNA]-3'-cytidine-3'-phosphate + a 5'-hydroxy-ribonucleotide-3'-[RNA].. It catalyses the reaction an [RNA] containing uridine + H2O = an [RNA]-3'-uridine-3'-phosphate + a 5'-hydroxy-ribonucleotide-3'-[RNA].. Functionally, endonuclease that catalyzes the cleavage of RNA on the 3' side of pyrimidine nucleotides. Acts on single-stranded and double-stranded RNA. The chain is Ribonuclease pancreatic (RNASE1) from Osphranter rufus (Red kangaroo).